The sequence spans 355 residues: Uroporphyrinogen decarboxylase (355 aa).

Substrate is bound by residues 27 to 31 (RQAGR), Asp-78, Tyr-155, Thr-210, and His-328.

It belongs to the uroporphyrinogen decarboxylase family. In terms of assembly, homodimer.

Its subcellular location is the cytoplasm. The catalysed reaction is uroporphyrinogen III + 4 H(+) = coproporphyrinogen III + 4 CO2. It participates in porphyrin-containing compound metabolism; protoporphyrin-IX biosynthesis; coproporphyrinogen-III from 5-aminolevulinate: step 4/4. In terms of biological role, catalyzes the decarboxylation of four acetate groups of uroporphyrinogen-III to yield coproporphyrinogen-III. This is Uroporphyrinogen decarboxylase from Pseudomonas fluorescens (strain SBW25).